A 142-amino-acid chain; its full sequence is Large ribosomal subunit protein uL11 (142 aa).

Belongs to the universal ribosomal protein uL11 family. As to quaternary structure, part of the ribosomal stalk of the 50S ribosomal subunit. Interacts with L10 and the large rRNA to form the base of the stalk. L10 forms an elongated spine to which L12 dimers bind in a sequential fashion forming a multimeric L10(L12)X complex. In terms of processing, one or more lysine residues are methylated.

In terms of biological role, forms part of the ribosomal stalk which helps the ribosome interact with GTP-bound translation factors. The protein is Large ribosomal subunit protein uL11 of Aeromonas hydrophila subsp. hydrophila (strain ATCC 7966 / DSM 30187 / BCRC 13018 / CCUG 14551 / JCM 1027 / KCTC 2358 / NCIMB 9240 / NCTC 8049).